We begin with the raw amino-acid sequence, 2116 residues long: Unconventional myosin-VIIb (2116 aa).

The Myosin motor domain occupies Q65–S760. G158–T165 is an ATP binding site. The tract at residues L637 to E659 is actin-binding. 6 IQ domains span residues I745–R765, L763–T792, Q786–R815, E814–Q834, M832–V861, and K855–L884. Phosphoserine is present on S904. The segment at E916–N1542 is mediates interaction with ANKS4B. A MyTH4 1 domain is found at H989–K1192. Positions I1197–A1506 constitute an FERM 1 domain. Residue S1371 is modified to Phosphoserine. One can recognise an SH3 domain in the interval E1501–T1567. Residues E1501 to T2116 are mediates interaction with CDHR2, CDHR5 and USH1C. 2 consecutive MyTH4 domains span residues Y1644–E1793 and E1790–L1896. S1645 carries the post-translational modification Phosphoserine. The FERM 2 domain occupies I1799 to M2102.

Belongs to the TRAFAC class myosin-kinesin ATPase superfamily. Myosin family. In terms of assembly, part of the IMAC/intermicrovillar adhesion complex/intermicrovillar tip-link complex composed of ANKS4B, MYO7B, USH1C, CDHR2 and CDHR5. Interacts with CDHR2. Interacts with CDHR5. Interacts with USH1C. Interacts with ANKS4B; requires initial interaction with USH1C. Interacts with CALML4; the interaction mediates the association of CALML4 with the IMAC/intermicrovillar adhesion complex.

It is found in the cytoplasm. It localises to the cytoskeleton. The protein localises to the cell projection. Its subcellular location is the microvillus. Its function is as follows. Myosins are actin-based motor molecules with ATPase activity. Their highly divergent tails are presumed to bind to membranous compartments, which would be moved relative to actin filaments. As part of the intermicrovillar adhesion complex/IMAC plays a role in epithelial brush border differentiation, controlling microvilli organization and length. May link the complex to the actin core bundle of microvilli. This is Unconventional myosin-VIIb from Homo sapiens (Human).